Consider the following 1069-residue polypeptide: Protocadherin-7 (1069 aa).

The N-terminal stretch at 1-28 (MLRMRTAGWARGWCLGCCLLLPLSLSLA) is a signal peptide. Cadherin domains lie at 29 to 143 (AAKQ…TPTF), 144 to 308 (PSPV…SPRF), 309 to 415 (EKSV…VPSI), 424 to 535 (PLKD…PPMF), 536 to 639 (GQSV…DPKF), 640 to 742 (MQDV…APTV), and 745 to 862 (PKNI…IPLT). Residues 29 to 879 (AAKQLLRYRL…SYEISKQRLS (851 aa)) lie on the Extracellular side of the membrane. A glycan (N-linked (GlcNAc...) asparagine) is linked at N79. Residues 182 to 242 (LLQEPGGGGS…GGTNPGGRSS (61 aa)) form a disordered region. Residues 207–221 (PGGGGNGASGGGSGG) show a composition bias toward gly residues. 6 N-linked (GlcNAc...) asparagine glycosylation sites follow: N689, N747, N780, N822, N840, and N845. The helical transmembrane segment at 880–900 (IVIGVVAGIMTVILIILIVVM) threads the bilayer. At 901-1069 (ARYCRSKNKN…RLHPYITVFG (169 aa)) the chain is on the cytoplasmic side. The tract at residues 910–988 (NGYEAGKKDH…RYRSVNGGPG (79 aa)) is disordered. Residues 930–944 (KSKKPKKDKKNKKSK) show a composition bias toward basic residues. Phosphoserine is present on residues S989 and S1011.

In terms of tissue distribution, expressed predominantly in brain and heart and at lower levels in various other tissues.

The protein localises to the cell membrane. In Homo sapiens (Human), this protein is Protocadherin-7 (PCDH7).